Consider the following 106-residue polypeptide: Large ribosomal subunit protein uL24 (106 aa).

Belongs to the universal ribosomal protein uL24 family. Part of the 50S ribosomal subunit.

In terms of biological role, one of two assembly initiator proteins, it binds directly to the 5'-end of the 23S rRNA, where it nucleates assembly of the 50S subunit. Functionally, one of the proteins that surrounds the polypeptide exit tunnel on the outside of the subunit. This Syntrophus aciditrophicus (strain SB) protein is Large ribosomal subunit protein uL24.